A 250-amino-acid chain; its full sequence is MLMRQKGIIIKAVDYGESDKIITILNEHGAKVPLMARRAKKVKTGLQAQTQLFVYGLFIYNQWRGMGTLNSVDVISQHYKLQMDLFVSSYASLAAETIERSMDEGDIAPYNYQLLQFVLEKIESGTSAQLMSVVVMLKCMKRFGFTASFNRCAVSGNDTQADLIGYSFKFDGAISRQEASKDVHAVILSNKTLYLLDVLQKLPIDKMNSLNIHQEIIDEMSDIILMLYREYAGMFFKSQKLINQLKRLEQ.

This sequence belongs to the RecO family.

Involved in DNA repair and RecF pathway recombination. The chain is DNA repair protein RecO from Staphylococcus aureus (strain MW2).